The chain runs to 288 residues: Probable endonuclease 4 (288 aa).

Positions 75, 115, 153, 187, 190, 224, 237, 239, and 269 each coordinate Zn(2+).

The protein belongs to the AP endonuclease 2 family. Zn(2+) serves as cofactor.

It carries out the reaction Endonucleolytic cleavage to 5'-phosphooligonucleotide end-products.. Functionally, endonuclease IV plays a role in DNA repair. It cleaves phosphodiester bonds at apurinic or apyrimidinic (AP) sites, generating a 3'-hydroxyl group and a 5'-terminal sugar phosphate. This is Probable endonuclease 4 from Chlamydia trachomatis serovar L2 (strain ATCC VR-902B / DSM 19102 / 434/Bu).